A 232-amino-acid polypeptide reads, in one-letter code: Anti-sigma-K factor RskA (232 aa).

The Cytoplasmic portion of the chain corresponds to 1–90 (MTEHTDFELL…EVRRQSRWRT (90 aa)). The chain crosses the membrane as a helical span at residues 91–111 (AAFASAAAIAVGLGAFGLGVL). Residues 112–232 (TRPSPPPTVA…GTILAELPLG (121 aa)) are Extracellular-facing.

This sequence belongs to the anti-sigma-K factor family.

It localises to the cell membrane. Functionally, an anti-sigma factor for extracytoplasmic function (ECF) sigma factor SigK. ECF sigma factors are held in an inactive form by an anti-sigma factor until released by regulated intramembrane proteolysis (RIP). RIP occurs when an extracytoplasmic signal triggers a concerted proteolytic cascade to transmit information and elicit cellular responses. The membrane-spanning regulatory substrate protein is first cut extracytoplasmically (site-1 protease, S1P), then within the membrane itself (site-2 protease, S2P, Rip1), while cytoplasmic proteases finish degrading the regulatory protein, liberating the sigma factor. The sequence is that of Anti-sigma-K factor RskA (rskA) from Mycobacterium tuberculosis (strain ATCC 25177 / H37Ra).